A 596-amino-acid polypeptide reads, in one-letter code: uncharacterized protein (596 aa).

Residues M1–A20 form the signal peptide. 2 stretches are compositionally biased toward basic and acidic residues: residues A25 to T90 and V161 to T184. The segment at A25–T184 is disordered. Coiled-coil stretches lie at residues R177–S281 and N318–D454.

Belongs to the peptidase M23B family.

This is an uncharacterized protein from Neisseria meningitidis serogroup B (strain ATCC BAA-335 / MC58).